Here is a 396-residue protein sequence, read N- to C-terminus: Ribosomal RNA large subunit methyltransferase I (396 aa).

The PUA domain occupies 2 to 79 (SIRIKLKPGR…KEEAIDRDFF (78 aa)).

The protein belongs to the methyltransferase superfamily. RlmI family.

The protein localises to the cytoplasm. It carries out the reaction cytidine(1962) in 23S rRNA + S-adenosyl-L-methionine = 5-methylcytidine(1962) in 23S rRNA + S-adenosyl-L-homocysteine + H(+). Specifically methylates the cytosine at position 1962 (m5C1962) of 23S rRNA. The sequence is that of Ribosomal RNA large subunit methyltransferase I from Shewanella amazonensis (strain ATCC BAA-1098 / SB2B).